Consider the following 213-residue polypeptide: Orotidine 5'-phosphate decarboxylase (213 aa).

Substrate-binding positions include aspartate 9, lysine 31, 59 to 68 (DFKVADIPAT), serine 115, 166 to 176 (PGVGAQGGKIE), glycine 191, and arginine 192. The active-site Proton donor is lysine 61.

Belongs to the OMP decarboxylase family. Type 1 subfamily. Homodimer.

The catalysed reaction is orotidine 5'-phosphate + H(+) = UMP + CO2. It functions in the pathway pyrimidine metabolism; UMP biosynthesis via de novo pathway; UMP from orotate: step 2/2. Its function is as follows. Catalyzes the decarboxylation of orotidine 5'-monophosphate (OMP) to uridine 5'-monophosphate (UMP). The chain is Orotidine 5'-phosphate decarboxylase from Methanocaldococcus jannaschii (strain ATCC 43067 / DSM 2661 / JAL-1 / JCM 10045 / NBRC 100440) (Methanococcus jannaschii).